The chain runs to 367 residues: 5-amino-6-(D-ribitylamino)uracil--L-tyrosine 4-hydroxyphenyl transferase (367 aa).

The 235-residue stretch at 56-290 (VTYVRNQNIN…MFAVARLFLD (235 aa)) folds into the Radical SAM core domain. Residues Cys-70, Cys-74, and Cys-77 each contribute to the [4Fe-4S] cluster site.

The protein belongs to the radical SAM superfamily. CofH family. In terms of assembly, consists of two subunits, CofG and CofH. The cofactor is [4Fe-4S] cluster.

The catalysed reaction is 5-amino-6-(D-ribitylamino)uracil + L-tyrosine + S-adenosyl-L-methionine = 5-amino-5-(4-hydroxybenzyl)-6-(D-ribitylimino)-5,6-dihydrouracil + 2-iminoacetate + 5'-deoxyadenosine + L-methionine + H(+). It participates in cofactor biosynthesis; coenzyme F0 biosynthesis. In terms of biological role, catalyzes the radical-mediated synthesis of 5-amino-5-(4-hydroxybenzyl)-6-(D-ribitylimino)-5,6-dihydrouracil from 5-amino-6-(D-ribitylamino)uracil and L-tyrosine. The sequence is that of 5-amino-6-(D-ribitylamino)uracil--L-tyrosine 4-hydroxyphenyl transferase from Methanoculleus marisnigri (strain ATCC 35101 / DSM 1498 / JR1).